Here is a 590-residue protein sequence, read N- to C-terminus: UvrABC system protein C (590 aa).

The region spanning 14 to 91 (DQPGCYLMKD…IKKYDPKYNV (78 aa)) is the GIY-YIG domain. One can recognise a UVR domain in the interval 196–231 (QQIKKELTEKMQEAAEQLEFERAKELRDQIAYIDST).

It belongs to the UvrC family. Interacts with UvrB in an incision complex.

The protein localises to the cytoplasm. In terms of biological role, the UvrABC repair system catalyzes the recognition and processing of DNA lesions. UvrC both incises the 5' and 3' sides of the lesion. The N-terminal half is responsible for the 3' incision and the C-terminal half is responsible for the 5' incision. This is UvrABC system protein C from Bacillus pumilus (strain SAFR-032).